A 698-amino-acid polypeptide reads, in one-letter code: Polyribonucleotide nucleotidyltransferase (698 aa).

Mg(2+)-binding residues include Asp-490 and Asp-496. Residues 557–616 (PKVVTMTIKPDKIRDVIGPGGKKINEIIDETGVKLDIEQDGTIFIGAVDQAMINRAREII) enclose the KH domain. The 69-residue stretch at 626–694 (GQTYQATVKR…KQGRVNASHR (69 aa)) folds into the S1 motif domain.

The protein belongs to the polyribonucleotide nucleotidyltransferase family. It depends on Mg(2+) as a cofactor.

It is found in the cytoplasm. The enzyme catalyses RNA(n+1) + phosphate = RNA(n) + a ribonucleoside 5'-diphosphate. Its function is as follows. Involved in mRNA degradation. Catalyzes the phosphorolysis of single-stranded polyribonucleotides processively in the 3'- to 5'-direction. The sequence is that of Polyribonucleotide nucleotidyltransferase from Staphylococcus aureus (strain MRSA252).